The following is a 224-amino-acid chain: Uracil-DNA glycosylase 2 (224 aa).

The active-site Proton acceptor is the D64.

The protein belongs to the uracil-DNA glycosylase (UDG) superfamily. UNG family.

The protein localises to the cytoplasm. The catalysed reaction is Hydrolyzes single-stranded DNA or mismatched double-stranded DNA and polynucleotides, releasing free uracil.. In terms of biological role, excises uracil residues from the DNA which can arise as a result of misincorporation of dUMP residues by DNA polymerase or due to deamination of cytosine. In Listeria monocytogenes serovar 1/2a (strain ATCC BAA-679 / EGD-e), this protein is Uracil-DNA glycosylase 2.